The following is a 231-amino-acid chain: Type 3 secretion system stator protein (231 aa).

The core secretion machinery of the T3SS is composed of approximately 20 different proteins, including cytoplasmic components, a base, an export apparatus and a needle. This subunit is part of the cytosolic complex. Interacts directly with Spa47/SctN (T3SS ATPase) and Spa33/SctQ (the major sorting platform component). Homodimer in solution.

The protein localises to the cytoplasm. Component of the type III secretion system (T3SS), also called injectisome, which is used to inject bacterial effector proteins into eukaryotic host cells. Acts as a regulator of the Spa47/SctN ATPase activity. It down-regulates the ATPase activity of the oligomeric Spa47/SctN, while it up-regulates the activity of the monomeric form. Important for translocation of MxiH/SctF, the major needle component. This Shigella flexneri protein is Type 3 secretion system stator protein.